The sequence spans 170 residues: Peptide deformylase (170 aa).

Residues cysteine 91 and histidine 133 each contribute to the Fe cation site. Glutamate 134 is an active-site residue. Histidine 137 contributes to the Fe cation binding site.

Belongs to the polypeptide deformylase family. It depends on Fe(2+) as a cofactor.

It catalyses the reaction N-terminal N-formyl-L-methionyl-[peptide] + H2O = N-terminal L-methionyl-[peptide] + formate. Removes the formyl group from the N-terminal Met of newly synthesized proteins. Requires at least a dipeptide for an efficient rate of reaction. N-terminal L-methionine is a prerequisite for activity but the enzyme has broad specificity at other positions. The sequence is that of Peptide deformylase from Histophilus somni (strain 2336) (Haemophilus somnus).